The primary structure comprises 301 residues: uncharacterized protein (301 aa).

Threonine 47 acts as the Charge relay system in catalysis. Tyrosine 136 (proton donor) is an active-site residue. Residue lysine 165 is the Schiff-base intermediate with substrate of the active site.

The protein belongs to the DapA family. Homotetramer.

It localises to the cytoplasm. This is an uncharacterized protein from Thermofilum pendens (strain DSM 2475 / Hrk 5).